Here is a 348-residue protein sequence, read N- to C-terminus: Probable dual-specificity RNA methyltransferase RlmN (348 aa).

The active-site Proton acceptor is glutamate 93. Residues 99–333 (TEKRLTACLS…VSLRKSRGSD (235 aa)) form the Radical SAM core domain. An intrachain disulfide couples cysteine 106 to cysteine 338. [4Fe-4S] cluster contacts are provided by cysteine 113, cysteine 117, and cysteine 120. S-adenosyl-L-methionine is bound by residues 160–161 (GE), serine 190, 219–221 (SLH), and asparagine 295. The active-site S-methylcysteine intermediate is cysteine 338.

The protein belongs to the radical SAM superfamily. RlmN family. The cofactor is [4Fe-4S] cluster.

Its subcellular location is the cytoplasm. The catalysed reaction is adenosine(2503) in 23S rRNA + 2 reduced [2Fe-2S]-[ferredoxin] + 2 S-adenosyl-L-methionine = 2-methyladenosine(2503) in 23S rRNA + 5'-deoxyadenosine + L-methionine + 2 oxidized [2Fe-2S]-[ferredoxin] + S-adenosyl-L-homocysteine. It catalyses the reaction adenosine(37) in tRNA + 2 reduced [2Fe-2S]-[ferredoxin] + 2 S-adenosyl-L-methionine = 2-methyladenosine(37) in tRNA + 5'-deoxyadenosine + L-methionine + 2 oxidized [2Fe-2S]-[ferredoxin] + S-adenosyl-L-homocysteine. Its function is as follows. Specifically methylates position 2 of adenine 2503 in 23S rRNA and position 2 of adenine 37 in tRNAs. The polypeptide is Probable dual-specificity RNA methyltransferase RlmN (Prochlorococcus marinus (strain MIT 9515)).